The chain runs to 472 residues: Violaxanthin de-epoxidase, chloroplastic (472 aa).

Intrachain disulfides connect cysteine 133–cysteine 151, cysteine 138–cysteine 145, cysteine 157–cysteine 174, cysteine 161–cysteine 170, cysteine 189–cysteine 196, and cysteine 242–cysteine 372. Residues 379–462 (VERLEKTVEE…MEAGEVEKLF (84 aa)) are a coiled coil.

It belongs to the calycin superfamily. Lipocalin family. Disulfide bonds. Reduction of the disulfides results in loss of a rigid structure, a decrease in thermal stability of 15 degrees Celsius and a loss of activity.

It localises to the plastid. The protein resides in the chloroplast thylakoid membrane. It catalyses the reaction all-trans-violaxanthin + 2 L-ascorbate = all-trans-zeaxanthin + 2 L-dehydroascorbate + 2 H2O. Irreversibly inhibited by DTT and iodoacetamide at pH 5.7 or pH 5.2, but not at pH 7.2. Regulated through Ca(2+) gating of H(+) flux at the CFoH(+) channel. Requires the presence of lipids forming reverse hexagonal structures such as monogalactosyldiacylglyceride (MGDG) or phosphatidylethanolamine. A negative curvature elastic stress in the thylakoid lipid bilayer is required for VDE1 activity. Its function is as follows. Part of the xanthophyll (or violaxanthin) cycle for controlling the concentration of zeaxanthin in chloroplasts. Catalyzes the two-step mono de-epoxidation reaction. Stereospecific for all-trans xanthophylls. Zeaxanthin induces the dissipation of excitation energy in the chlorophyll of the light-harvesting protein complex of photosystem II. The chain is Violaxanthin de-epoxidase, chloroplastic from Spinacia oleracea (Spinach).